The sequence spans 600 residues: ATP-dependent lipid A-core flippase (600 aa).

4 helical membrane-spanning segments follow: residues 26 to 46 (VGIFLLSILGFVIFASTQPML), 82 to 102 (LLIVLIAAWQGLGSFLGNYFL), 167 to 187 (VFLFIYLLMMNWKLTLVMLAI), and 266 to 286 (PMLQLVIYSAMAVLMFLVLFL). The 292-residue stretch at 30 to 321 (LLSILGFVIF…LSEVSSTIQK (292 aa)) folds into the ABC transmembrane type-1 domain. Residues 353-589 (LEVKNLSFFY…NGYYARLHAM (237 aa)) form the ABC transporter domain. Residue 387-394 (GRSGSGKS) coordinates ATP.

It belongs to the ABC transporter superfamily. Lipid exporter (TC 3.A.1.106) family. As to quaternary structure, homodimer.

The protein localises to the cell inner membrane. The enzyme catalyses ATP + H2O + lipid A-core oligosaccharideSide 1 = ADP + phosphate + lipid A-core oligosaccharideSide 2.. Its function is as follows. Involved in lipopolysaccharide (LPS) biosynthesis. Translocates lipid A-core from the inner to the outer leaflet of the inner membrane. Transmembrane domains (TMD) form a pore in the inner membrane and the ATP-binding domain (NBD) is responsible for energy generation. This Pseudomonas syringae pv. tomato (strain ATCC BAA-871 / DC3000) protein is ATP-dependent lipid A-core flippase.